The chain runs to 64 residues: MKASELLQKDQAALNKELADLLKAQFGLRMQLATQQLTNTSQLKKVRRDIARVRTVMTQKANQK.

The protein belongs to the universal ribosomal protein uL29 family.

In Burkholderia ambifaria (strain MC40-6), this protein is Large ribosomal subunit protein uL29.